We begin with the raw amino-acid sequence, 141 residues long: Large ribosomal subunit protein uL22 (141 aa).

The interval 110–141 (EEKKTVAKKTTTTKAPAKKTTSTKKATVKKES) is disordered. Positions 117–134 (KKTTTTKAPAKKTTSTKK) are enriched in low complexity.

It belongs to the universal ribosomal protein uL22 family. In terms of assembly, part of the 50S ribosomal subunit.

Its function is as follows. This protein binds specifically to 23S rRNA; its binding is stimulated by other ribosomal proteins, e.g. L4, L17, and L20. It is important during the early stages of 50S assembly. It makes multiple contacts with different domains of the 23S rRNA in the assembled 50S subunit and ribosome. The globular domain of the protein is located near the polypeptide exit tunnel on the outside of the subunit, while an extended beta-hairpin is found that lines the wall of the exit tunnel in the center of the 70S ribosome. This Campylobacter jejuni (strain RM1221) protein is Large ribosomal subunit protein uL22.